The primary structure comprises 118 residues: Vesicle-associated membrane protein 1 (118 aa).

Residues 1–36 (MSAPAQPPAEGTEGTAPGGGPPGPPPNMTSNRRLQQ) are disordered. Over 1 to 96 (MSAPAQPPAE…KRKYWWKNCK (96 aa)) the chain is Cytoplasmic. The 61-residue stretch at 33-93 (RLQQTQAQVE…AKLKRKYWWK (61 aa)) folds into the v-SNARE coiled-coil homology domain. At Ser-63 the chain carries Phosphoserine. The helical; Anchor for type IV membrane protein transmembrane segment at 97–116 (MMIMLGAICAIIVVVIVIYF) threads the bilayer. Topologically, residues 117-118 (FT) are vesicular.

This sequence belongs to the synaptobrevin family. Interacts with VAPA and VAPB. In terms of processing, (Microbial infection) Targeted and hydrolyzed by C.botulinum neurotoxin type B (BoNT/B, botB) which probably hydrolyzes the 78-Gln-|-Phe-79 bond and inhibits neurotransmitter release. Post-translationally, (Microbial infection) Targeted and hydrolyzed by C.botulinum neurotoxin type D (BoNT/D, botD) which probably hydrolyzes the 61-Arg-|-Leu-62 bond and inhibits neurotransmitter release. BoNT/D has low catalytic activity on this protein due to its sequence. Note that humans are not known to be infected by C.botulinum type D. (Microbial infection) Targeted and hydrolyzed by C.botulinum neurotoxin type F (BoNT/F, botF) which probably hydrolyzes the 60-Gln-|-Lys-61 bond and inhibits neurotransmitter release. In terms of processing, (Microbial infection) Targeted and hydrolyzed by C.botulinum neurotoxin type X (BoNT/X) which probably hydrolyzes the 68-Arg-|-Ala-69 bond and inhibits neurotransmitter release. It remains unknown whether BoNT/X is ever produced, or what organisms it targets. In terms of tissue distribution, nervous system, skeletal muscle and adipose tissue.

The protein resides in the cytoplasmic vesicle. Its subcellular location is the secretory vesicle. The protein localises to the synaptic vesicle membrane. It is found in the synapse. It localises to the synaptosome. The protein resides in the cytoplasmic vesicle membrane. Its subcellular location is the mitochondrion outer membrane. Functionally, involved in the targeting and/or fusion of transport vesicles to their target membrane. This Homo sapiens (Human) protein is Vesicle-associated membrane protein 1 (VAMP1).